The sequence spans 388 residues: tRNA(Ile)-lysidine synthase (388 aa).

51-56 (SGGRDS) contributes to the ATP binding site.

The protein belongs to the tRNA(Ile)-lysidine synthase family.

Its subcellular location is the cytoplasm. It catalyses the reaction cytidine(34) in tRNA(Ile2) + L-lysine + ATP = lysidine(34) in tRNA(Ile2) + AMP + diphosphate + H(+). In terms of biological role, ligates lysine onto the cytidine present at position 34 of the AUA codon-specific tRNA(Ile) that contains the anticodon CAU, in an ATP-dependent manner. Cytidine is converted to lysidine, thus changing the amino acid specificity of the tRNA from methionine to isoleucine. The polypeptide is tRNA(Ile)-lysidine synthase (Bifidobacterium longum (strain DJO10A)).